A 199-amino-acid chain; its full sequence is MSRVLIIESSARQQDSVSRQLTQTFIQQWQAAHPGDSITVRDLARNPVPHLDANLLGGWMKPAEQRSAAEQDSLQRSNELTEELLAADVLVMAAPMYNFAIPSTLKAWLDHVLRAGVTFKYTDTGPQGLLTGKRAYVLTARGGIYAGSTADHQEPYLRQVMGFIGIHDVEFIHAEGLNLGGDFHEKGLNQANAKLAQVA.

Residues Ser-10, 16–18, and 96–99 each bind FMN; these read SVS and MYNF.

This sequence belongs to the azoreductase type 1 family. In terms of assembly, homodimer. FMN is required as a cofactor.

The enzyme catalyses 2 a quinone + NADH + H(+) = 2 a 1,4-benzosemiquinone + NAD(+). It carries out the reaction N,N-dimethyl-1,4-phenylenediamine + anthranilate + 2 NAD(+) = 2-(4-dimethylaminophenyl)diazenylbenzoate + 2 NADH + 2 H(+). In terms of biological role, quinone reductase that provides resistance to thiol-specific stress caused by electrophilic quinones. Also exhibits azoreductase activity. Catalyzes the reductive cleavage of the azo bond in aromatic azo compounds to the corresponding amines. The polypeptide is FMN-dependent NADH:quinone oxidoreductase 2 (Pseudomonas fluorescens (strain ATCC BAA-477 / NRRL B-23932 / Pf-5)).